The chain runs to 289 residues: Cytochrome bc1 complex cytochrome c subunit (289 aa).

The span at 1–11 (MKKLGFTRSSR) shows a compositional bias: basic residues. The interval 1–28 (MKKLGFTRSSRRCSQPQEREQESERSRR) is disordered. Residues 37–55 (GLLLLVALTVSGGLAAVLT) form a helical membrane-spanning segment. Cytochrome c domains are found at residues 69–149 (ALLR…QANG) and 170–248 (TDLG…RTVI). Positions 82, 85, 86, 183, 186, and 187 each coordinate heme c. The chain crosses the membrane as a helical span at residues 267–287 (GMAIWIIGMVTAIGLALWIGA).

As to quaternary structure, the cytochrome bc1 complex is composed of a cytochrome b (QcrB), the Rieske iron-sulfur protein (QcrA) and a diheme cytochrome c (QcrC) subunit. Binds 2 heme c groups covalently per subunit.

It localises to the cell membrane. The enzyme catalyses a quinol + 2 Fe(III)-[cytochrome c](out) = a quinone + 2 Fe(II)-[cytochrome c](out) + 2 H(+)(out). In terms of biological role, cytochrome b subunit of the cytochrome bc1 complex, an essential component of the respiratory electron transport chain required for ATP synthesis. The bc1 complex catalyzes the oxidation of ubiquinol and the reduction of cytochrome c in the respiratory chain. The bc1 complex operates through a Q-cycle mechanism that couples electron transfer to generation of the proton gradient that drives ATP synthesis. The sequence is that of Cytochrome bc1 complex cytochrome c subunit (qcrC) from Mycobacterium leprae (strain TN).